A 946-amino-acid polypeptide reads, in one-letter code: Nonribosomal peptide synthetase pngA (946 aa).

Residues 32–450 (AIASREPTRY…AGREKDSIIV (419 aa)) form an adenylation (A) domain region. The Carrier domain occupies 580–659 (QPRSGLEQSL…TLSDALKQHA (80 aa)). Position 618 is an O-(pantetheine 4'-phosphoryl)serine (Ser618). The segment at 681–933 (PIWLVHPVGG…ILDAENIFSF (253 aa)) is thioesterase (TE) domain.

This sequence belongs to the NRP synthetase family.

The enzyme catalyses 2 3-phenylpyruvate + H(+) = phenguignardate + H2O. Functionally, nonribosomal peptide synthetase that mediates the biosynthesis of phenguignardic acid. PngA alone is sufficient for phenguignardic acid synthesis. PngA first activates phenylpyruvic acid (PPA) through its A domain to AMP-PPA. The PPA unit is then loaded to the T domain and eventually transferred to the TE domain. Another PPA unit is then loaded onto the T domain. The TE domain likely promotes the enolate formation on the attached unit, followed by a nucleophilic attack on the carbonyl to yield an ether linkage between the two units. Finally, the TE domain probably catalyzes a similar reaction to give the cyclized dioxolanone core and releases phenguignardic acid. The sequence is that of Nonribosomal peptide synthetase pngA from Aspergillus terreus (strain NIH 2624 / FGSC A1156).